Reading from the N-terminus, the 260-residue chain is LOB domain-containing protein 6 (260 aa).

One can recognise an LOB domain in the interval Ser-32–Leu-133.

The protein belongs to the LOB domain-containing protein family. Interacts with RS2. In terms of tissue distribution, expressed in leaves, leaf primordia, immature ears, immature tassels, whole ovules, silk and husk leaves. Found on the adaxial side of organs.

The protein localises to the nucleus. Its function is as follows. Promotes the switch from proliferation to differentiation in the embryo sac. Negative regulator of cell proliferation in the adaxial side of leaves. Regulates the formation of a symmetric lamina and the establishment of venation. Interacts directly with RS2 (rough sheath 2) to repress some knox homeobox genes. This is LOB domain-containing protein 6 (LBD6) from Zea mays (Maize).